The following is a 282-amino-acid chain: Endochitinase 4 (282 aa).

The 282-residue stretch at 1-282 (GAKNGVHPPL…TWSINWDGSK (282 aa)) folds into the GH18 domain. Glu-112 functions as the Proton donor in the catalytic mechanism. The N-linked (GlcNAc...) asparagine glycan is linked to Asn-265.

Belongs to the glycosyl hydrolase 18 family. Chitinase class V subfamily.

The protein resides in the secreted. It carries out the reaction Random endo-hydrolysis of N-acetyl-beta-D-glucosaminide (1-&gt;4)-beta-linkages in chitin and chitodextrins.. Functionally, secreted chitinase involved in the degradation of chitin, a component of the cell walls of fungi and exoskeletal elements of some animals (including worms and arthropods). Participates in the infection process and directly acts in the penetration process of the host cuticle. The protein is Endochitinase 4 (chi4) of Metarhizium anisopliae (Entomophthora anisopliae).